We begin with the raw amino-acid sequence, 251 residues long: Probable transcriptional regulatory protein MRA_2631 (251 aa).

It belongs to the TACO1 family.

The protein localises to the cytoplasm. The chain is Probable transcriptional regulatory protein MRA_2631 from Mycobacterium tuberculosis (strain ATCC 25177 / H37Ra).